A 509-amino-acid polypeptide reads, in one-letter code: Coiled-coil domain-containing protein 181 (509 aa).

The segment covering 60–82 has biased composition (basic and acidic residues); the sequence is EHTKQHSDPDKSLQDDVSPRRND. Disordered stretches follow at residues 60–121 and 285–367; these read EHTK…EEDE and GEPL…EEKE. Residues 320–334 are compositionally biased toward polar residues; that stretch reads RTQSARISPVTSTYC. Residues 335–375 adopt a coiled-coil conformation; sequence LSPRQKELQKQLEQKREKLKREEEQRKIEEEKEKKRENDIV. The segment covering 338-367 has biased composition (basic and acidic residues); that stretch reads RQKELQKQLEQKREKLKREEEQRKIEEEKE.

This sequence belongs to the CCDC181 family. As to quaternary structure, homodimer. Interacts with HOOK1. Interacts with HOOK2. Interacts with HOOK3.

Its subcellular location is the cytoplasm. It localises to the cytoskeleton. It is found in the cell projection. The protein localises to the cilium. The protein resides in the flagellum. In terms of biological role, microtubule-binding protein that localizes to the microtubular manchette of elongating spermatids. The polypeptide is Coiled-coil domain-containing protein 181 (Macaca fascicularis (Crab-eating macaque)).